Here is a 466-residue protein sequence, read N- to C-terminus: Trigger factor (466 aa).

The PPIase FKBP-type domain occupies 166–245 (GDFAQIDLVA…LNAVKERELP (80 aa)). 2 disordered regions span residues 313-332 (LEQE…TESS) and 424-466 (LPDD…AADK). Residues 426–444 (DDGEAVDEDATPEDTDAPA) show a composition bias toward acidic residues. The segment covering 453–466 (PKKKAAAKKKAADK) has biased composition (basic residues).

Belongs to the FKBP-type PPIase family. Tig subfamily.

The protein resides in the cytoplasm. It catalyses the reaction [protein]-peptidylproline (omega=180) = [protein]-peptidylproline (omega=0). Its function is as follows. Involved in protein export. Acts as a chaperone by maintaining the newly synthesized protein in an open conformation. Functions as a peptidyl-prolyl cis-trans isomerase. This is Trigger factor from Leifsonia xyli subsp. xyli (strain CTCB07).